We begin with the raw amino-acid sequence, 160 residues long: Transcriptional repressor NrdR (160 aa).

Residues 3–34 (CPFCGNADTQVVDSRVSEEGDTIRRRRRCLSC) fold into a zinc finger. An ATP-cone domain is found at 49–139 (PSVVKRDGSR…VYKSFEDIGE (91 aa)).

It belongs to the NrdR family. Requires Zn(2+) as cofactor.

Its function is as follows. Negatively regulates transcription of bacterial ribonucleotide reductase nrd genes and operons by binding to NrdR-boxes. The sequence is that of Transcriptional repressor NrdR from Bordetella bronchiseptica (strain ATCC BAA-588 / NCTC 13252 / RB50) (Alcaligenes bronchisepticus).